A 303-amino-acid chain; its full sequence is Probable cell division protein WhiA (303 aa).

A DNA-binding region (H-T-H motif) is located at residues 272-303; the sequence is SIQQLADSLSTPLTKSGVNHRLRKINKIADEL.

This sequence belongs to the WhiA family.

Functionally, involved in cell division and chromosome segregation. The chain is Probable cell division protein WhiA from Streptococcus pneumoniae serotype 4 (strain ATCC BAA-334 / TIGR4).